A 599-amino-acid chain; its full sequence is Elongation factor 4 (599 aa).

The region spanning 2 to 185 (KYIRNFSIIA…RIIIDIPVPQ (184 aa)) is the tr-type G domain. Residues 14–19 (NHGKST) and 132–135 (NKID) each bind GTP.

The protein belongs to the TRAFAC class translation factor GTPase superfamily. Classic translation factor GTPase family. LepA subfamily.

The protein resides in the cell inner membrane. The enzyme catalyses GTP + H2O = GDP + phosphate + H(+). In terms of biological role, required for accurate and efficient protein synthesis under certain stress conditions. May act as a fidelity factor of the translation reaction, by catalyzing a one-codon backward translocation of tRNAs on improperly translocated ribosomes. Back-translocation proceeds from a post-translocation (POST) complex to a pre-translocation (PRE) complex, thus giving elongation factor G a second chance to translocate the tRNAs correctly. Binds to ribosomes in a GTP-dependent manner. This chain is Elongation factor 4, found in Blochmanniella floridana.